A 121-amino-acid polypeptide reads, in one-letter code: MSAQTGSTNVSADKGKGKSVAEPQDVTMGEGEDSSSEDDVRSQGLKTAAREHYLTTYIAEEVEEEASDNEIDKSNIIQGRRTRGKKIDFAAAAKDLPAEDDEDEDDDFQSEGEDDDEMGGN.

Residues 1-11 show a composition bias toward polar residues; that stretch reads MSAQTGSTNVS. Disordered regions lie at residues 1–45 and 62–121; these read MSAQ…SQGL and VEEE…MGGN. Residues 98–121 show a composition bias toward acidic residues; the sequence is AEDDEDEDDDFQSEGEDDDEMGGN.

Belongs to the CHZ1 family. In terms of assembly, forms a heterotrimer with H2A.Z-H2B, stabilizing the association of the histone dimer. Also, with a lower affinity, forms a heterotrimer with H2A-H2B.

It localises to the nucleus. Its function is as follows. Forms a chaperone-bound H2A.Z-H2B complex that acts as a source for SWR1 complex-dependent H2A to H2A.Z histone replacement in chromatin. This is Histone H2A.Z-specific chaperone chz1 (chz1) from Sclerotinia sclerotiorum (strain ATCC 18683 / 1980 / Ss-1) (White mold).